We begin with the raw amino-acid sequence, 507 residues long: Transcription factor CP2 (507 aa).

One can recognise a Grh/CP2 DB domain in the interval 61–300 (ENKILPFQYV…SPGFNSSHNS (240 aa)). The DNA-binding stretch occupies residues 133-395 (EHQQLEGWRW…LFNALKGRMV (263 aa)). Disordered regions lie at residues 240-268 (PKGA…YQPS) and 296-316 (SSHN…QPEP). Over residues 241-265 (KGADRKQKTDREKMEKRTPQEKEKY) the composition is skewed to basic and acidic residues.

It belongs to the grh/CP2 family. CP2 subfamily. In terms of assembly, component of the SSP (stage selector protein) complex, which appears to be a heteromer of TFCP2 and 2 copies of NFE4.

It localises to the nucleus. Its function is as follows. May function as a transcription factor. The chain is Transcription factor CP2 (tfcp2) from Xenopus tropicalis (Western clawed frog).